Consider the following 787-residue polypeptide: ATP-dependent zinc metalloprotease FtsH (787 aa).

Topologically, residues 1–5 (MNRKN) are cytoplasmic. The chain crosses the membrane as a helical span at residues 6-26 (VIRMVTAIAVVVLLGWSFFYF). The Extracellular segment spans residues 27–110 (SDDTRGYKFV…KVTTAVNEGS (84 aa)). Residues 111–131 (ILGELLVYVLPLLLLVGLFVM) traverse the membrane as a helical segment. The Cytoplasmic segment spans residues 132-787 (FSRMQGGARM…VSPSNPPAHG (656 aa)). Residue 203-210 (GPPGTGKT) participates in ATP binding. Histidine 425 contacts Zn(2+). Glutamate 426 is a catalytic residue. Residues histidine 429 and aspartate 501 each coordinate Zn(2+). Positions 616 to 787 (DFGGRIPSDK…VSPSNPPAHG (172 aa)) are disordered. 2 stretches are compositionally biased toward low complexity: residues 650–671 (AFKA…AAQS) and 700–709 (YGAPPGWHAP). The segment covering 710–720 (GWPPQQPPDYW) has biased composition (pro residues). The segment covering 721–732 (YPPEQQPSQSPY) has biased composition (low complexity). Residues 733-762 (WPQPAPSYPGQAPPPYPSYPPCPSYPPPGQ) show a composition bias toward pro residues.

The protein in the central section; belongs to the AAA ATPase family. In the C-terminal section; belongs to the peptidase M41 family. Homohexamer. Zn(2+) serves as cofactor.

The protein resides in the cell membrane. Its function is as follows. Acts as a processive, ATP-dependent zinc metallopeptidase for both cytoplasmic and membrane proteins. Plays a role in the quality control of integral membrane proteins. The chain is ATP-dependent zinc metalloprotease FtsH from Mycobacterium leprae (strain TN).